Here is a 207-residue protein sequence, read N- to C-terminus: N-(5'-phosphoribosyl)anthranilate isomerase (207 aa).

Belongs to the TrpF family.

It carries out the reaction N-(5-phospho-beta-D-ribosyl)anthranilate = 1-(2-carboxyphenylamino)-1-deoxy-D-ribulose 5-phosphate. It functions in the pathway amino-acid biosynthesis; L-tryptophan biosynthesis; L-tryptophan from chorismate: step 3/5. The chain is N-(5'-phosphoribosyl)anthranilate isomerase from Legionella pneumophila subsp. pneumophila (strain Philadelphia 1 / ATCC 33152 / DSM 7513).